The following is a 938-amino-acid chain: Isoleucine--tRNA ligase (938 aa).

Residues Pro58–His68 carry the 'HIGH' region motif. Glu566 serves as a coordination point for L-isoleucyl-5'-AMP. The short motif at Lys607–Ser611 is the 'KMSKS' region element. Position 610 (Lys610) interacts with ATP. Zn(2+)-binding residues include Cys906, Cys909, Cys926, and Cys929.

The protein belongs to the class-I aminoacyl-tRNA synthetase family. IleS type 1 subfamily. As to quaternary structure, monomer. Zn(2+) is required as a cofactor.

The protein resides in the cytoplasm. The catalysed reaction is tRNA(Ile) + L-isoleucine + ATP = L-isoleucyl-tRNA(Ile) + AMP + diphosphate. Functionally, catalyzes the attachment of isoleucine to tRNA(Ile). As IleRS can inadvertently accommodate and process structurally similar amino acids such as valine, to avoid such errors it has two additional distinct tRNA(Ile)-dependent editing activities. One activity is designated as 'pretransfer' editing and involves the hydrolysis of activated Val-AMP. The other activity is designated 'posttransfer' editing and involves deacylation of mischarged Val-tRNA(Ile). This Desulfovibrio desulfuricans (strain ATCC 27774 / DSM 6949 / MB) protein is Isoleucine--tRNA ligase.